The chain runs to 541 residues: MAKQIKFGEEARRALERGVNQLADTVKVTLGPKGRNVVLDKKFGSPMITNDGVTIAKEIELEDPFENMGAQLVKEVATKTNDVAGDGTTTATLLAQAIIREGLKNVAAGANPMLLKKGIAKAVDAAVEGIKEISQKVKGKEDIARVASISANDEVIGELIADAMEKVTNDGVITVEEAKTMGTNLEIVEGMQFDRGYVSPYMVTDTEKMEAVLDEPYILITDKKISNIQDILPLLEQIVQQGKKLVIIAEDVEGEALATLLVNKLRGTFTCVAVKAPGFGDRRKAMLEDIAILTGGQVITSDLGLELKDTTVEQLGRARQVKVQKENTIIVDGAGDPKEIQKRIASIKSQIEETTSDFDREKLQERLAKLAGGVAVIQVGAATETEMKEKKLRIEDALAATKAAVEEGIVAGGGTALVNVIPKVAKVLDTVSGDEKTGVQIILRALEEPVRQIAENAGLEGSVIVEKVKASEPGIGFDAYNEKYVNMIEAGIVDPAKVTRSALQNAASVASMVLTTESVVADIPEKETSGGPGGAGMGGMY.

ATP is bound by residues 29–32, 86–90, G413, and D494; these read TLGP and DGTTT.

It belongs to the chaperonin (HSP60) family. As to quaternary structure, forms a cylinder of 14 subunits composed of two heptameric rings stacked back-to-back. Interacts with the co-chaperonin GroES.

The protein resides in the cytoplasm. It catalyses the reaction ATP + H2O + a folded polypeptide = ADP + phosphate + an unfolded polypeptide.. Functionally, together with its co-chaperonin GroES, plays an essential role in assisting protein folding. The GroEL-GroES system forms a nano-cage that allows encapsulation of the non-native substrate proteins and provides a physical environment optimized to promote and accelerate protein folding. The sequence is that of Chaperonin GroEL from Acetivibrio thermocellus (strain ATCC 27405 / DSM 1237 / JCM 9322 / NBRC 103400 / NCIMB 10682 / NRRL B-4536 / VPI 7372) (Clostridium thermocellum).